Here is a 267-residue protein sequence, read N- to C-terminus: Phosphate import ATP-binding protein PstB (267 aa).

Positions 12–251 constitute an ABC transporter domain; sequence VSLDNVSIRY…EFDKTKNMFN (240 aa). Residue 44 to 51 participates in ATP binding; sequence GPSGCGKS.

Belongs to the ABC transporter superfamily. Phosphate importer (TC 3.A.1.7) family. As to quaternary structure, the complex is composed of two ATP-binding proteins (PstB), two transmembrane proteins (PstC and PstA) and a solute-binding protein (PstS).

It is found in the cell inner membrane. The enzyme catalyses phosphate(out) + ATP + H2O = ADP + 2 phosphate(in) + H(+). Part of the ABC transporter complex PstSACB involved in phosphate import. Responsible for energy coupling to the transport system. This Prochlorococcus marinus (strain NATL2A) protein is Phosphate import ATP-binding protein PstB.